Here is a 361-residue protein sequence, read N- to C-terminus: Homer protein homolog 3 (361 aa).

The interval 1–80 (MSTAREQPIF…TKTSQKFGQW (80 aa)) is required for interaction with NFATC2. A WH1 domain is found at 1–113 (MSTAREQPIF…EKFQEVKEAA (113 aa)). Residues 114–169 (RLAREKSQDGGELTSPALGLASHQVPPSPLVSANGPGEEKLFRSQSADAPGPTERE) are disordered. Phosphoserine occurs at positions 120 and 159. Coiled coils occupy residues 191–243 (ALQD…SEVT) and 254–358 (GQSL…RLAE).

This sequence belongs to the Homer family. As to quaternary structure, tetramer. Isoform 1 and isoform 2 encode coiled-coil structures that mediate homo- and heteromultimerization. Interacts with NFATC2; interaction is calcium independent; interaction competes with PPP3CA for NFATC2 binding; interaction is reduced by AKT activation. Interacts with NFATC1 and NFATC4. Interacts with SHANK1; forms a high-order complex at least composed of SHANK1 and HOMER3; the complex formation is regulated by CAMK2A-mediated phosphorylation.

The protein resides in the cytoplasm. It localises to the postsynaptic density. Its subcellular location is the synapse. Postsynaptic density scaffolding protein. Binds and cross-links cytoplasmic regions of GRM1, GRM5, ITPR1, DNM3, RYR1, RYR2, SHANK1 and SHANK3. By physically linking GRM1 and GRM5 with ER-associated ITPR1 receptors, it aids the coupling of surface receptors to intracellular calcium release. Isoforms can be differently regulated and may play an important role in maintaining the plasticity at glutamatergic synapses. Negatively regulates T cell activation by inhibiting the calcineurin-NFAT pathway. Acts by competing with calcineurin/PPP3CA for NFAT protein binding, hence preventing NFAT activation by PPP3CA. This is Homer protein homolog 3 from Homo sapiens (Human).